An 851-amino-acid polypeptide reads, in one-letter code: MKNNDKLDSHTPMMQQYLRLKAQHPEILLFYRMGDFYELFYSDAKRASQLLDISLTKRGASAGEPIPMAGVPYHSIENYLAKLVQLGESAAICEQIGDPATSKGPVERKVVRIVTPGTISDEALLQERQDNLLAAIWQDAKGFGYATLDISSGRFRVAEPADLETMAAELQRTNPAELLYPENFEPMSLIEHRHGLRRRPLWEFELDTAKQQLNLQFGTRDLIGFGVEQAHLALRAAGCLLQYVKDTQRTSLPHIRGLTMERQQDGIIMDAATRRNLELTQNLSGGSENTLAAILDCSVTPMGSRMLKRWLHMPIRDIRVLTDRQQAIGGLQDIAAELQTPLRQVGDLERILARLALRTARPRDLARMRHAFQQLPEIHRLLQPIDVPHVQNLLSQVGQFDELQDLLERAIVETPPVLVRDGGVIASGYNAELDEWRALADGATDYLDRLEIREREKLGLDTLKVGFNGVHGYYIQVSRGQSHLVPIHYVRRQTLKNAERYIIPELKEYEDKVLTSKGKALAIEKGLYEEIFDLLLPHLPELQLSANALAELDVLANLAERAETLNYSCPTLSDKPGIKIMGGRHPVVEQVLKEPFISNPLTLSPQRRMLIITGPNMGGKSTYMRQTALIVLLAHLGSYVPADQATIGPIDRIFTRVGAADDLASGRSTFMVEMTETANILHNATEQSLVLMDEIGRGTSTYDGLSLAWACAENLASRIKAMTLFATHYFELTTLPEKMEGVANVHLDALEHGETIAFMHSVQEGAASKSYGLAVAALAGVPRDVIKRARQKLKELESLSNNAAASTIDGSQMTLLNEEIPPAVEALEALDPDSLSPRQALEWIYRLKNMV.

Residue Gly-614–Ser-621 participates in ATP binding.

This sequence belongs to the DNA mismatch repair MutS family.

Its function is as follows. This protein is involved in the repair of mismatches in DNA. It is possible that it carries out the mismatch recognition step. This protein has a weak ATPase activity. In Yersinia pseudotuberculosis serotype O:1b (strain IP 31758), this protein is DNA mismatch repair protein MutS.